We begin with the raw amino-acid sequence, 150 residues long: Small ribosomal subunit protein eS19 (150 aa).

This sequence belongs to the eukaryotic ribosomal protein eS19 family. Part of the 30S ribosomal subunit.

Its function is as follows. May be involved in maturation of the 30S ribosomal subunit. The sequence is that of Small ribosomal subunit protein eS19 from Thermoplasma acidophilum (strain ATCC 25905 / DSM 1728 / JCM 9062 / NBRC 15155 / AMRC-C165).